The sequence spans 292 residues: 2-(5''-triphosphoribosyl)-3'-dephosphocoenzyme-A synthase (292 aa).

The protein belongs to the CitG/MdcB family.

The catalysed reaction is 3'-dephospho-CoA + ATP = 2'-(5''-triphospho-alpha-D-ribosyl)-3'-dephospho-CoA + adenine. Catalyzes the formation of 2-(5''-triphosphoribosyl)-3'-dephosphocoenzyme-A, the precursor of the prosthetic group of the holo-acyl carrier protein (gamma chain) of citrate lyase, from ATP and dephospho-CoA. This Escherichia coli O17:K52:H18 (strain UMN026 / ExPEC) protein is 2-(5''-triphosphoribosyl)-3'-dephosphocoenzyme-A synthase.